The chain runs to 420 residues: Tyrosine--tRNA ligase (420 aa).

Tyr-38 is a binding site for L-tyrosine. A 'HIGH' region motif is present at residues 43–52 (PTGDSLHIGH). L-tyrosine is bound by residues Tyr-169 and Gln-173. Positions 231-235 (KFGKS) match the 'KMSKS' region motif. Lys-234 contacts ATP. One can recognise an S4 RNA-binding domain in the interval 353-419 (KNLVDFLVDT…GKRKYTLVTI (67 aa)).

Belongs to the class-I aminoacyl-tRNA synthetase family. TyrS type 1 subfamily. Homodimer.

Its subcellular location is the cytoplasm. It catalyses the reaction tRNA(Tyr) + L-tyrosine + ATP = L-tyrosyl-tRNA(Tyr) + AMP + diphosphate + H(+). Functionally, catalyzes the attachment of tyrosine to tRNA(Tyr) in a two-step reaction: tyrosine is first activated by ATP to form Tyr-AMP and then transferred to the acceptor end of tRNA(Tyr). This Lactobacillus helveticus (strain DPC 4571) protein is Tyrosine--tRNA ligase.